The primary structure comprises 276 residues: B3 domain-containing protein REM22 (276 aa).

Residues 11 to 115 constitute a DNA-binding region (TF-B3); that stretch reads SETMSIQDTV…VFHFCVYEYG (105 aa). A disordered region spans residues 141 to 164; sequence GNEESTKGLEESPRRGGTSRRRAK. A compositionally biased stretch (basic and acidic residues) spans 144–154; that stretch reads ESTKGLEESPR.

It localises to the nucleus. This is B3 domain-containing protein REM22 (REM22) from Arabidopsis thaliana (Mouse-ear cress).